The sequence spans 90 residues: Probable two-component-system connector protein YmgA (90 aa).

The segment covering 63-80 has biased composition (polar residues); that stretch reads SDSGGPNRRTATADNKSM. The tract at residues 63–90 is disordered; that stretch reads SDSGGPNRRTATADNKSMFNGKKINRIH.

Its function is as follows. Probably a connector protein for RcsB/C regulation of biofilm formation, providing additional signal input into the two-component signaling pathway. May serve to stimulate biofilm maturation, probably via the Rcs phosphorelay. Mild overexpression at 16 degrees Celsius increases the production of colanic acid, an exopolysaccharide and matrix component, and reduces adhesive curli fimbriae expression. Both of these effects require RcsB. The protein is Probable two-component-system connector protein YmgA (ymgA) of Escherichia coli (strain K12).